A 573-amino-acid polypeptide reads, in one-letter code: ESX-1 secretion system protein EccA1 (573 aa).

Position 334-341 (glycine 334–threonine 341) interacts with ATP.

Belongs to the CbxX/CfxQ family. As to quaternary structure, part of the ESX-1 / type VII secretion system (T7SS), which is composed of cytosolic and membrane components.

Its subcellular location is the cytoplasm. Functionally, part of the ESX-1 / type VII specialized secretion system (T7SS), which exports several proteins including EsxA and EsxB. EccA1 exhibits ATPase activity and may provide energy for the export of ESX-1 substrates. This chain is ESX-1 secretion system protein EccA1, found in Mycobacterium leprae (strain TN).